The following is a 525-amino-acid chain: MSNIHEHKILILDFGSQYTQLIARRIREIGVYCELWAWDVSEAQIKGFAPNGIILAGGPESVTADESPRAPEYVFNAGVPVLGICYGMQTMSEQLGGKVIEGIGEGEFGYAQIEIQEPSELFKSIEDAISESGKPLLDVWMSHGDKVLDIPEGFVTVANTETCPHAAMANEDKKFYGVQFHPEVTHTRQGKRMLEHFALDICECEANWKPTSIIEDAVERLKKQIGDDEVILGLSGGVDSSVVAMLLHRAIGDKLTCVFVDNGLLRLNEADQVMDMFGDHFGLNIVHVNAENRFLDAMKGEADPEAKRKIIGHVFVEIFDEESKKCKNAKWLAQGTIYPDVIESAGSATGKAHVIKSHHNVGGLPDDMELGLVEPLRELFKDEVRKIGLELGLPYDMLYRHPFPGPGLGVRVLGEVKKEYCDLLRLADAIFIEELHKAELYHKVSQAFTVFLPVRSVGVMGDGRKYDWVVSLRAVETIDFMTAHWAHLPYDFLGRVSNRIINEIDGISRVVYDISGKPPATIEWE.

A Glutamine amidotransferase type-1 domain is found at 8–207 (KILILDFGSQ…ALDICECEAN (200 aa)). Cys85 serves as the catalytic Nucleophile. Catalysis depends on residues His181 and Glu183. In terms of domain architecture, GMPS ATP-PPase spans 208–400 (WKPTSIIEDA…LGLPYDMLYR (193 aa)). Position 235–241 (235–241 (SGGVDSS)) interacts with ATP.

In terms of assembly, homodimer.

It carries out the reaction XMP + L-glutamine + ATP + H2O = GMP + L-glutamate + AMP + diphosphate + 2 H(+). It participates in purine metabolism; GMP biosynthesis; GMP from XMP (L-Gln route): step 1/1. In terms of biological role, catalyzes the synthesis of GMP from XMP. The polypeptide is GMP synthase [glutamine-hydrolyzing] (Shewanella sediminis (strain HAW-EB3)).